A 123-amino-acid polypeptide reads, in one-letter code: MTVTLTEKAEFRLRAFLRGSAKDANETTKGIRISVKDGGCSGYEYLMDVTSQPQPDDLVSQQGSVLVYVDAKSAPLLEGIVIDFVEGLVESGFKFTNPNATSTCGCGKSFKAGDCSPEGVPCS.

It belongs to the HesB/IscA family.

In terms of biological role, may be required for efficient nitrogen fixation. The chain is Protein HesB, heterocyst (hesB1) from Trichormus variabilis (strain ATCC 29413 / PCC 7937) (Anabaena variabilis).